The chain runs to 122 residues: Large ribosomal subunit protein bL12 (122 aa).

This sequence belongs to the bacterial ribosomal protein bL12 family. In terms of assembly, homodimer. Part of the ribosomal stalk of the 50S ribosomal subunit. Forms a multimeric L10(L12)X complex, where L10 forms an elongated spine to which 2 to 4 L12 dimers bind in a sequential fashion. Binds GTP-bound translation factors.

Forms part of the ribosomal stalk which helps the ribosome interact with GTP-bound translation factors. Is thus essential for accurate translation. In Staphylococcus haemolyticus (strain JCSC1435), this protein is Large ribosomal subunit protein bL12.